We begin with the raw amino-acid sequence, 379 residues long: Protein-glutamate methylesterase/protein-glutamine glutaminase (379 aa).

Residues Lys4–Leu121 form the Response regulatory domain. 4-aspartylphosphate is present on Asp55. The CheB-type methylesterase domain occupies Ser186–Ala379. Catalysis depends on residues Ser198, His225, and Asp323.

This sequence belongs to the CheB family. Phosphorylated by CheA. Phosphorylation of the N-terminal regulatory domain activates the methylesterase activity.

The protein resides in the cytoplasm. The enzyme catalyses [protein]-L-glutamate 5-O-methyl ester + H2O = L-glutamyl-[protein] + methanol + H(+). It carries out the reaction L-glutaminyl-[protein] + H2O = L-glutamyl-[protein] + NH4(+). Involved in chemotaxis. Part of a chemotaxis signal transduction system that modulates chemotaxis in response to various stimuli. Catalyzes the demethylation of specific methylglutamate residues introduced into the chemoreceptors (methyl-accepting chemotaxis proteins or MCP) by CheR. Also mediates the irreversible deamidation of specific glutamine residues to glutamic acid. The polypeptide is Protein-glutamate methylesterase/protein-glutamine glutaminase (Pseudoalteromonas atlantica (strain T6c / ATCC BAA-1087)).